The primary structure comprises 62 residues: Photosystem II reaction center protein Z (62 aa).

Transmembrane regions (helical) follow at residues 8-28 (AVFA…VVLA) and 41-61 (FSGA…NSFI).

It belongs to the PsbZ family. In terms of assembly, PSII is composed of 1 copy each of membrane proteins PsbA, PsbB, PsbC, PsbD, PsbE, PsbF, PsbH, PsbI, PsbJ, PsbK, PsbL, PsbM, PsbT, PsbY, PsbZ, Psb30/Ycf12, at least 3 peripheral proteins of the oxygen-evolving complex and a large number of cofactors. It forms dimeric complexes.

It localises to the plastid. The protein resides in the chloroplast thylakoid membrane. In terms of biological role, may control the interaction of photosystem II (PSII) cores with the light-harvesting antenna, regulates electron flow through the 2 photosystem reaction centers. PSII is a light-driven water plastoquinone oxidoreductase, using light energy to abstract electrons from H(2)O, generating a proton gradient subsequently used for ATP formation. In Anthoceros angustus (Hornwort), this protein is Photosystem II reaction center protein Z.